Consider the following 227-residue polypeptide: Large ribosomal subunit protein uL3 (227 aa).

This sequence belongs to the universal ribosomal protein uL3 family. In terms of assembly, part of the 50S ribosomal subunit. Forms a cluster with proteins L14 and L19.

In terms of biological role, one of the primary rRNA binding proteins, it binds directly near the 3'-end of the 23S rRNA, where it nucleates assembly of the 50S subunit. The sequence is that of Large ribosomal subunit protein uL3 from Persephonella marina (strain DSM 14350 / EX-H1).